Reading from the N-terminus, the 432-residue chain is T-box transcription factor T (432 aa).

The segment at residues 49–217 (LWTRFKELTN…HNPFAKAFLD (169 aa)) is a DNA-binding region (T-box). Residues 274 to 306 (CERYSSLRNHRSAPYPSPYTHRNNSPNNLADNS) are disordered. Over residues 293-306 (THRNNSPNNLADNS) the composition is skewed to polar residues.

When not bound to DNA, exists as a monomer. Binds DNA as a dimer. Expressed in presumptive mesodermal cells around the blastopore, and then in the notochord.

The protein localises to the nucleus. Functionally, involved in the transcriptional regulation of genes required for mesoderm formation and differentiation. Binds to the palindromic T site 5'-TTCACACCTAGGTGTGAA-3' DNA sequence. Causes dorsal mesodermal differentiation of animal cap ectoderm when co-expressed with wnt8 and noggin. None of these molecules causes dorsal mesoderm formation when expressed alone. Establishes the left/right axis at early gastrula stage by directly up-regulating mesodermal expression of zic3. The protein is T-box transcription factor T of Xenopus laevis (African clawed frog).